The primary structure comprises 158 residues: Transcription elongation factor GreA (158 aa).

Positions 10-76 form a coiled coil; sequence TLEGKKKLEE…QIEKMIRNAE (67 aa).

The protein belongs to the GreA/GreB family.

Necessary for efficient RNA polymerase transcription elongation past template-encoded arresting sites. The arresting sites in DNA have the property of trapping a certain fraction of elongating RNA polymerases that pass through, resulting in locked ternary complexes. Cleavage of the nascent transcript by cleavage factors such as GreA or GreB allows the resumption of elongation from the new 3'terminus. GreA releases sequences of 2 to 3 nucleotides. In Halalkalibacterium halodurans (strain ATCC BAA-125 / DSM 18197 / FERM 7344 / JCM 9153 / C-125) (Bacillus halodurans), this protein is Transcription elongation factor GreA.